The following is a 603-amino-acid chain: Penicillin-binding protein activator LpoA (603 aa).

Residues 1–24 (MINHKRLSVPRILTPVALAITLAA) form the signal peptide. Residue C25 is the site of N-palmitoyl cysteine attachment. A lipid anchor (S-diacylglycerol cysteine) is attached at C25.

It belongs to the LpoA family. Interacts with PBP1a.

The protein resides in the cell outer membrane. Regulator of peptidoglycan synthesis that is essential for the function of penicillin-binding protein 1A (PBP1a). In Vibrio antiquarius (strain Ex25), this protein is Penicillin-binding protein activator LpoA.